Reading from the N-terminus, the 398-residue chain is ATP-dependent RNA helicase eIF4A (398 aa).

The Q motif motif lies at 25 to 53; the sequence is DSFDSMDLKPELLRGVYAYGFERPSAIQQ. Residues 56 to 226 form the Helicase ATP-binding domain; that stretch reads IKPIIAGHDV…TKFMRDPIRI (171 aa). 69 to 76 is a binding site for ATP; sequence AQSGTGKT. A DEAD box motif is present at residues 174-177; sequence DEAD. In terms of domain architecture, Helicase C-terminal spans 237–398; it reads GIKQFYIAVE…EMPMNVADLI (162 aa).

Belongs to the DEAD box helicase family. eIF4A subfamily. Component of the eIF4F complex, which composition varies with external and internal environmental conditions. It is composed of at least eIF4A, eIF4E and eIF4G.

Its subcellular location is the cytoplasm. It catalyses the reaction ATP + H2O = ADP + phosphate + H(+). ATP-dependent RNA helicase which is a subunit of the eIF4F complex involved in cap recognition and is required for mRNA binding to ribosome. In the current model of translation initiation, eIF4A unwinds RNA secondary structures in the 5'-UTR of mRNAs which is necessary to allow efficient binding of the small ribosomal subunit, and subsequent scanning for the initiator codon. The polypeptide is ATP-dependent RNA helicase eIF4A (tif1) (Aspergillus niger (strain ATCC MYA-4892 / CBS 513.88 / FGSC A1513)).